The following is a 761-amino-acid chain: Disintegrin and metalloproteinase domain-containing protein 24 (761 aa).

The N-terminal stretch at 1–34 (MVAMSEALVHARITLLQAWLRMLLFSSVWPPTWC) is a signal peptide. Positions 35 to 200 (AEYKGPPETV…GKSTRMQSIY (166 aa)) are excised as a propeptide. Over 35-697 (AEYKGPPETV…SKKDAPEKPN (663 aa)) the chain is Extracellular. Asn140 carries N-linked (GlcNAc...) asparagine glycosylation. A Cysteine switch motif is present at residues 172-179 (MRCGLTDE). Cys174 is a binding site for Zn(2+). The Peptidase M12B domain occupies 208–400 (LYIKLALVID…KSCIHREPRP (193 aa)). N-linked (GlcNAc...) asparagine glycans are attached at residues Asn227 and Asn301. 7 disulfides stabilise this stretch: Cys323-Cys393, Cys357-Cys379, Cys359-Cys364, Cys465-Cys485, Cys635-Cys646, Cys640-Cys652, and Cys654-Cys663. Residue His342 participates in Zn(2+) binding. Residue Glu343 is part of the active site. 2 residues coordinate Zn(2+): His346 and His352. 3 N-linked (GlcNAc...) asparagine glycosylation sites follow: Asn378, Asn390, and Asn479. One can recognise a Disintegrin domain in the interval 406–493 (LKVCGNGIVE…ECPEDLFVQD (88 aa)). The EGF-like domain occupies 631–664 (WVNDCTPETCNMKGVCNNKQHCHCDVGWSPPNCQ). The helical transmembrane segment at 698–718 (VIIWLLPIICVAVVLSVLFCL) threads the bilayer. At 719-761 (SGATKKSREAAASQPAEERVKPPYEGAEPSYETVKPPDEWANP) the chain is on the cytoplasmic side. Residues 725–761 (SREAAASQPAEERVKPPYEGAEPSYETVKPPDEWANP) are disordered.

In terms of assembly, monomer. Requires Zn(2+) as cofactor. In terms of processing, the prodomain is removed during sperm passage through the caput epididymis after the protein has reached the cell surface. Not processed in the secretory pathway. In terms of tissue distribution, expressed exclusively in testis and more specifically on the surface of mature sperm (at protein level).

It is found in the membrane. Functionally, plasma membrane protease present on mature sperm that may be involved in sperm function during epididymal maturation and/or fertilization. The chain is Disintegrin and metalloproteinase domain-containing protein 24 from Mus musculus (Mouse).